Reading from the N-terminus, the 582-residue chain is Formate--tetrahydrofolate ligase (582 aa).

Residue Thr-65–Thr-72 participates in ATP binding.

This sequence belongs to the formate--tetrahydrofolate ligase family.

It carries out the reaction (6S)-5,6,7,8-tetrahydrofolate + formate + ATP = (6R)-10-formyltetrahydrofolate + ADP + phosphate. Its pathway is one-carbon metabolism; tetrahydrofolate interconversion. The sequence is that of Formate--tetrahydrofolate ligase from Aliivibrio fischeri (strain ATCC 700601 / ES114) (Vibrio fischeri).